The sequence spans 214 residues: Immunoglobulin lambda-like polypeptide 5 (214 aa).

An N-terminal signal peptide occupies residues 1 to 35 (MRPKTGQVGCETPEELGPGPRQRWPLLLLGLAMVA). Residues 98–109 (VFGTGTKVTVLG) are j region. The interval 110–214 (QPKANPTVTL…EKTVAPTECS (105 aa)) is c region. The Ig-like C1-type domain occupies 115–209 (PTVTLFPPSS…EGSTVEKTVA (95 aa)). A disulfide bond links cysteine 136 and cysteine 195.

In terms of tissue distribution, contrary to IGLL1, not expressed in pre-B-cells.

It is found in the secreted. The protein is Immunoglobulin lambda-like polypeptide 5 (IGLL5) of Homo sapiens (Human).